The primary structure comprises 449 residues: MYHLWIKCLAAWIFLKRCNGVHAMPAKAPMYPNEPFIVLWNAPTTQCPLRYKVDLDLKTFHIVANANDSLSGSVVAIFYPNHLGVYPHIDERGHFFHGIIPQNESLTKHLNKSKSDINRMIPLKTFHGLGVIDWENWRPQWDRNWGSKNVYRNRSIQFAKKLHPELSEDKIKRLAKKEYEKAAKSFMRDTLLLAEEMRPNGYWGYYLYPDCQNYDYKTKGDQYTGKCPDIEMSRNDQLLWLWRDSTALFPNVYLEIILRSSDNALKFVHHRLKESMRIASMAREDYALPVFVYARPFYAYTFEPLTQEDLVTTVGETAAMGAAGIVFWGSMQYASTVDSCQKVKTYMNGPLGRYIVNVTTAAKICSHALCRKNGRCVRKHSDSNAFLHLFPESFRIMVHANATEKKAIVKGKLELKDLIYLRKNFMCQCYQGWKGLYCEEYSIKDIRKI.

An N-terminal signal peptide occupies residues 1–23 (MYHLWIKCLAAWIFLKRCNGVHA). Disulfide bonds link Cys-47–Cys-340 and Cys-211–Cys-227. 3 N-linked (GlcNAc...) asparagine glycosylation sites follow: Asn-67, Asn-103, and Asn-111. The Proton donor role is filled by Glu-135. A glycan (N-linked (GlcNAc...) asparagine) is linked at Asn-153. The N-linked (GlcNAc...) asparagine glycan is linked to Asn-357. 3 cysteine pairs are disulfide-bonded: Cys-365-Cys-376, Cys-370-Cys-427, and Cys-429-Cys-438. An N-linked (GlcNAc...) asparagine glycan is attached at Asn-401. The EGF-like domain occupies 427-438 (CQCYQGWKGLYC).

Belongs to the glycosyl hydrolase 56 family. In terms of assembly, monomer. As to expression, expressed by the venom gland.

The protein resides in the secreted. The catalysed reaction is Random hydrolysis of (1-&gt;4)-linkages between N-acetyl-beta-D-glucosamine and D-glucuronate residues in hyaluronate.. In terms of biological role, snake venom endo-hyaluronidase that degrades hyaluronan to smaller oligosaccharide fragments. In venom, it is not toxic by itself, but increases the diffusion of other venom proteins by degrading the extracellular matrix. In addition, it displays antiedematogenic activity. The polypeptide is Hyaluronidase-2 (Bitis arietans (African puff adder)).